We begin with the raw amino-acid sequence, 478 residues long: Transcript termination protein A18 (478 aa).

Residues 98-254 enclose the Helicase ATP-binding domain; it reads KLSTHRPMYM…NDVVNVLKVS (157 aa). 111–118 is a binding site for ATP; it reads LSCGFGKT. Positions 204–207 match the DESH box motif; sequence DESH. Residues 302-468 form the Helicase C-terminal domain; sequence PRNNLIVETV…GIEGTKEEPV (167 aa).

The protein belongs to the helicase family. Poxviruses subfamily. Interacts with G2. Might be part of a transcription complex composed at least of G2, A18, and H5.

The protein resides in the virion. In terms of biological role, DNA helicase which seems to act as a postreplicative transcription termination factor. Involved in ATP-dependent release of nascent RNA. Forms a stable complex with single-stranded DNA, and to a lesser extent RNA. This is Transcript termination protein A18 from Rabbit fibroma virus (strain Kasza) (RFV).